A 338-amino-acid polypeptide reads, in one-letter code: Ferredoxin--NADP reductase (338 aa).

Residues Asp-38, Gln-46, Tyr-51, Val-91, Phe-125, Asp-291, and Thr-331 each contribute to the FAD site.

Belongs to the ferredoxin--NADP reductase type 2 family. In terms of assembly, homodimer. The cofactor is FAD.

The enzyme catalyses 2 reduced [2Fe-2S]-[ferredoxin] + NADP(+) + H(+) = 2 oxidized [2Fe-2S]-[ferredoxin] + NADPH. The protein is Ferredoxin--NADP reductase of Orientia tsutsugamushi (strain Boryong) (Rickettsia tsutsugamushi).